A 263-amino-acid chain; its full sequence is Putative protein JayE (263 aa).

Belongs to the Mu gp47/PBSX XkdT family.

The sequence is that of Putative protein JayE (jayE) from Escherichia coli (strain K12).